Here is a 589-residue protein sequence, read N- to C-terminus: L-fucose isomerase (589 aa).

Active-site proton acceptor residues include E340 and D364. The Mn(2+) site is built by E340, D364, and H527.

The protein belongs to the L-fucose isomerase family. Mn(2+) serves as cofactor.

Its subcellular location is the cytoplasm. The catalysed reaction is L-fucose = L-fuculose. The protein operates within carbohydrate degradation; L-fucose degradation; L-lactaldehyde and glycerone phosphate from L-fucose: step 1/3. Its function is as follows. Converts the aldose L-fucose into the corresponding ketose L-fuculose. This is L-fucose isomerase from Haemophilus influenzae (strain PittEE).